The primary structure comprises 200 residues: uncharacterized protein (200 aa).

This is an uncharacterized protein from Ureaplasma parvum serovar 3 (strain ATCC 700970).